The sequence spans 241 residues: B-cell receptor-associated protein 29 (241 aa).

Topologically, residues 1–6 (MTLQWA) are lumenal. The chain crosses the membrane as a helical span at residues 7-27 (AVATFLYAEIGLILIFCLPFI). Topologically, residues 28 to 43 (PPQRWQKIFSFNVWGK) are cytoplasmic. Residues 44 to 64 (IATFWNKAFLTIIILLIVLFL) form a helical membrane-spanning segment. The Lumenal portion of the chain corresponds to 65-103 (DAVREVRKYSSVHTIEKSSTSRPDAYEHTQMKLFRSQRN). Residues 104-124 (LYISGFSLFFWLVLRRLVTLI) form a helical membrane-spanning segment. Topologically, residues 125 to 241 (TQLAKELSNK…RLERGNKKRL (117 aa)) are cytoplasmic. Positions 166-233 (GKDEECVLEA…KEHSELQDRL (68 aa)) form a coiled coil. Residues 193 to 223 (KTSDALSKAQNDVMEMKMQSERLSKEYDQLL) form a disordered region. Residues 206–223 (MEMKMQSERLSKEYDQLL) are compositionally biased toward basic and acidic residues. The Di-lysine motif signature appears at 238–241 (KKRL).

The protein belongs to the BCAP29/BCAP31 family. In terms of assembly, homodimer and heterodimer with BCAP31. Binds CASP8 as a complex containing BCAP31, BCAP29, BCL2 and/or BCL2L1. Interacts with VAMP3, VAMP1 and membrane IgD immunoglobulins. May interact with ACTG1 and non-muscle myosin II.

Its subcellular location is the endoplasmic reticulum membrane. In terms of biological role, may play a role in anterograde transport of membrane proteins from the endoplasmic reticulum to the Golgi. May be involved in CASP8-mediated apoptosis. The protein is B-cell receptor-associated protein 29 (BCAP29) of Pongo abelii (Sumatran orangutan).